We begin with the raw amino-acid sequence, 100 residues long: Large ribosomal subunit protein bL28 (100 aa).

Belongs to the bacterial ribosomal protein bL28 family.

The sequence is that of Large ribosomal subunit protein bL28 from Ehrlichia chaffeensis (strain ATCC CRL-10679 / Arkansas).